The following is a 335-amino-acid chain: Large ribosomal subunit protein uL10 (335 aa).

Residues 306–335 (VEETVEEEEEEEEEEDAEEEAAAGLGALFG) are disordered. Positions 308–326 (ETVEEEEEEEEEEDAEEEA) are enriched in acidic residues.

Belongs to the universal ribosomal protein uL10 family. In terms of assembly, part of the 50S ribosomal subunit. Forms part of the ribosomal stalk which helps the ribosome interact with GTP-bound translation factors. Forms a heptameric L10(L12)2(L12)2(L12)2 complex, where L10 forms an elongated spine to which the L12 dimers bind in a sequential fashion.

Forms part of the ribosomal stalk, playing a central role in the interaction of the ribosome with GTP-bound translation factors. The polypeptide is Large ribosomal subunit protein uL10 (Methanobrevibacter smithii (strain ATCC 35061 / DSM 861 / OCM 144 / PS)).